The primary structure comprises 129 residues: NADPH-dependent 7-cyano-7-deazaguanine reductase (129 aa).

The active-site Thioimide intermediate is the C34. Residue D41 is the Proton donor of the active site. Residues 56-58 (VEL) and 75-76 (HE) each bind substrate.

It belongs to the GTP cyclohydrolase I family. QueF type 1 subfamily.

The protein resides in the cytoplasm. It catalyses the reaction 7-aminomethyl-7-carbaguanine + 2 NADP(+) = 7-cyano-7-deazaguanine + 2 NADPH + 3 H(+). It functions in the pathway tRNA modification; tRNA-queuosine biosynthesis. In terms of biological role, catalyzes the NADPH-dependent reduction of 7-cyano-7-deazaguanine (preQ0) to 7-aminomethyl-7-deazaguanine (preQ1). The polypeptide is NADPH-dependent 7-cyano-7-deazaguanine reductase (Nitrosococcus oceani (strain ATCC 19707 / BCRC 17464 / JCM 30415 / NCIMB 11848 / C-107)).